The following is a 106-amino-acid chain: UPF0145 protein PputW619_2377 (106 aa).

Belongs to the UPF0145 family.

The protein is UPF0145 protein PputW619_2377 of Pseudomonas putida (strain W619).